The sequence spans 474 residues: Amidophosphoribosyltransferase (474 aa).

The propeptide occupies 1-10 (MLGESEVRDK). C11 (nucleophile) is an active-site residue. Positions 11-234 (CGIVGIYSQD…PGEILHLNRG (224 aa)) constitute a Glutamine amidotransferase type-2 domain. C250 contacts [4Fe-4S] cluster. Residues S297, D359, and D360 each coordinate Mg(2+). Residues C396, C447, and C450 each contribute to the [4Fe-4S] cluster site.

In the C-terminal section; belongs to the purine/pyrimidine phosphoribosyltransferase family. The cofactor is Mg(2+). [4Fe-4S] cluster serves as cofactor.

The catalysed reaction is 5-phospho-beta-D-ribosylamine + L-glutamate + diphosphate = 5-phospho-alpha-D-ribose 1-diphosphate + L-glutamine + H2O. The protein operates within purine metabolism; IMP biosynthesis via de novo pathway; N(1)-(5-phospho-D-ribosyl)glycinamide from 5-phospho-alpha-D-ribose 1-diphosphate: step 1/2. Functionally, catalyzes the formation of phosphoribosylamine from phosphoribosylpyrophosphate (PRPP) and glutamine. The sequence is that of Amidophosphoribosyltransferase from Methanothermobacter thermautotrophicus (strain ATCC 29096 / DSM 1053 / JCM 10044 / NBRC 100330 / Delta H) (Methanobacterium thermoautotrophicum).